The chain runs to 652 residues: Interferon-induced GTP-binding protein Mx1 (652 aa).

The tract at residues 1 to 27 is disordered; the sequence is MKERTSACRHGTPQKHPDTSEESQAME. The region spanning 58 to 331 is the Dynamin-type G domain; sequence DLALPAIAVI…LTSHICKSLP (274 aa). Residues 68 to 75 form a G1 motif region; the sequence is GDQSSGKS. Residue 68–75 participates in GTP binding; that stretch reads GDQSSGKS. Residues 93 to 95 are G2 motif; it reads VTR. The tract at residues 169 to 172 is G3 motif; that stretch reads DLPG. Residues 169-173 and 238-241 each bind GTP; these read DLPGI and TKPD. Residues 238-241 form a G4 motif region; the sequence is TKPD. Positions 270–273 are G5 motif; sequence KCRG. The bundle signaling element (BSE) stretch occupies residues 332-357; it reads ILENQINVNHQIASEELQKYGADIPE. The middle domain stretch occupies residues 357–526; sequence EDDSKRLSFL…HFQMEHIVYC (170 aa). Residues 358–622 are stalk; that stretch reads DDSKRLSFLM…TSKCNWFLTE (265 aa). The GED domain maps to 564–652; the sequence is TTEMTQHLNA…AQRKLAKFSN (89 aa).

Belongs to the TRAFAC class dynamin-like GTPase superfamily. Dynamin/Fzo/YdjA family. As to quaternary structure, homooligomer. Oligomerizes into multimeric filamentous or ring-like structures by virtue of its stalk domain. Oligomerization is critical for GTPase activity, protein stability, and recognition of viral target structures. Interacts with TRPC1, TRPC3, TRPC4, TRPC5, TRPC6 and TRPC7. Interacts with HSPA5. Interacts with TUBB/TUBB5. Interacts with DDX39A and DDX39B. Post-translationally, ISGylated.

The protein resides in the nucleus. It localises to the cytoplasm. Its subcellular location is the endoplasmic reticulum membrane. The protein localises to the perinuclear region. Its function is as follows. Interferon-induced dynamin-like GTPase which has antiviral activity against influenza A virus, (IAV) and Thogoto virus (THOV). Inhibits IAV by interfering with the process of primary transcription, probably by affecting the viral polymerase function. The protein is Interferon-induced GTP-binding protein Mx1 (Mx1) of Rattus norvegicus (Rat).